The primary structure comprises 90 residues: MYRSKKQSQILSYQELLKKQRRWFPIEQSLCPKDILDLLTTIKTSINKYTVATTATENPHIRRALHDQLDTAVYLHDELSDLLLEKGWLG.

Belongs to the CotF family.

The protein resides in the spore coat. This chain is Spore coat protein F-like protein YgzC (ygzC), found in Bacillus subtilis (strain 168).